The primary structure comprises 104 residues: MSEFINVTVVREANVFFNGGVVSRTVIFPDGTKKTLGIMQPGEYTFNTGAPEIMEILTGELDLKLPGSDLWDRIGGGESFEVPANSSFTMKVLSLTDYCCSFLG.

Belongs to the nucleoside phosphorylase PpnP family.

It catalyses the reaction a purine D-ribonucleoside + phosphate = a purine nucleobase + alpha-D-ribose 1-phosphate. It carries out the reaction adenosine + phosphate = alpha-D-ribose 1-phosphate + adenine. The catalysed reaction is cytidine + phosphate = cytosine + alpha-D-ribose 1-phosphate. The enzyme catalyses guanosine + phosphate = alpha-D-ribose 1-phosphate + guanine. It catalyses the reaction inosine + phosphate = alpha-D-ribose 1-phosphate + hypoxanthine. It carries out the reaction thymidine + phosphate = 2-deoxy-alpha-D-ribose 1-phosphate + thymine. The catalysed reaction is uridine + phosphate = alpha-D-ribose 1-phosphate + uracil. The enzyme catalyses xanthosine + phosphate = alpha-D-ribose 1-phosphate + xanthine. Catalyzes the phosphorolysis of diverse nucleosides, yielding D-ribose 1-phosphate and the respective free bases. Can use uridine, adenosine, guanosine, cytidine, thymidine, inosine and xanthosine as substrates. Also catalyzes the reverse reactions. This chain is Pyrimidine/purine nucleoside phosphorylase, found in Geobacter metallireducens (strain ATCC 53774 / DSM 7210 / GS-15).